The following is an 890-amino-acid chain: Alanine--tRNA ligase (890 aa).

4 residues coordinate Zn(2+): histidine 573, histidine 577, cysteine 675, and histidine 679.

Belongs to the class-II aminoacyl-tRNA synthetase family. It depends on Zn(2+) as a cofactor.

The protein localises to the cytoplasm. It catalyses the reaction tRNA(Ala) + L-alanine + ATP = L-alanyl-tRNA(Ala) + AMP + diphosphate. In terms of biological role, catalyzes the attachment of alanine to tRNA(Ala) in a two-step reaction: alanine is first activated by ATP to form Ala-AMP and then transferred to the acceptor end of tRNA(Ala). Also edits incorrectly charged Ser-tRNA(Ala) and Gly-tRNA(Ala) via its editing domain. This chain is Alanine--tRNA ligase, found in Streptomyces avermitilis (strain ATCC 31267 / DSM 46492 / JCM 5070 / NBRC 14893 / NCIMB 12804 / NRRL 8165 / MA-4680).